Here is a 269-residue protein sequence, read N- to C-terminus: Protein-L-isoaspartate O-methyltransferase (269 aa).

Residues 1–53 (MSAGQRPAPKFPLRLDQVKPAGRSGAAPLLRPQRPLHQAATERGRGTTPAGLG) form a disordered region. Ser-113 is a catalytic residue.

The protein belongs to the methyltransferase superfamily. L-isoaspartyl/D-aspartyl protein methyltransferase family.

The protein resides in the cytoplasm. The enzyme catalyses [protein]-L-isoaspartate + S-adenosyl-L-methionine = [protein]-L-isoaspartate alpha-methyl ester + S-adenosyl-L-homocysteine. Its function is as follows. Catalyzes the methyl esterification of L-isoaspartyl residues in peptides and proteins that result from spontaneous decomposition of normal L-aspartyl and L-asparaginyl residues. It plays a role in the repair and/or degradation of damaged proteins. This Methylibium petroleiphilum (strain ATCC BAA-1232 / LMG 22953 / PM1) protein is Protein-L-isoaspartate O-methyltransferase.